Here is a 22-residue protein sequence, read N- to C-terminus: Mu-conotoxin TIIIA (22 aa).

3 disulfides stabilise this stretch: Cys-4/Cys-16, Cys-5/Cys-21, and Cys-11/Cys-22. Pro-8 and Pro-18 each carry 4-hydroxyproline. Cys-22 is subject to Cysteine amide.

This sequence belongs to the conotoxin M superfamily. As to expression, expressed by the venom duct.

It is found in the secreted. Functionally, mu-conotoxins block voltage-gated sodium channels (Nav). This synthetic toxin reversibly and potently blocks rNav1.4/SCN4A (IC(50) is 9 nM) and rNav1.2/SCN2A (IC(50) is 40 nM). It also moderately blocks rNav1.1/SCN1A, rNav1.3/SCN3A, and rNav1.6/SCN8A. The block of SCN1A and SCN2A is modified when beta-subunits are coexpressed with alpha subunits. Hence, blocks of channels containing beta-1 and beta-3 subunits are more potent (compared to channels without beta subunits), whereas blocks of channels containing beta-2 and beta-4 subunits are less potent (compared to channels without beta subunits). This chain is Mu-conotoxin TIIIA, found in Conus tulipa (Fish-hunting cone snail).